We begin with the raw amino-acid sequence, 384 residues long: S-adenosylmethionine synthase (384 aa).

Residue His-15 coordinates ATP. Residue Asp-17 participates in Mg(2+) binding. Glu-43 lines the K(+) pocket. Residues Glu-56 and Gln-99 each contribute to the L-methionine site. The interval 99–109 is flexible loop; sequence QSPDINQGVDR. ATP-binding positions include 164-166, 230-231, Asp-239, 245-246, Ala-262, and Lys-266; these read DAK, RF, and RK. Asp-239 contributes to the L-methionine binding site. L-methionine is bound at residue Lys-270.

The protein belongs to the AdoMet synthase family. In terms of assembly, homotetramer; dimer of dimers. It depends on Mg(2+) as a cofactor. K(+) is required as a cofactor.

It localises to the cytoplasm. The enzyme catalyses L-methionine + ATP + H2O = S-adenosyl-L-methionine + phosphate + diphosphate. Its pathway is amino-acid biosynthesis; S-adenosyl-L-methionine biosynthesis; S-adenosyl-L-methionine from L-methionine: step 1/1. In terms of biological role, catalyzes the formation of S-adenosylmethionine (AdoMet) from methionine and ATP. The overall synthetic reaction is composed of two sequential steps, AdoMet formation and the subsequent tripolyphosphate hydrolysis which occurs prior to release of AdoMet from the enzyme. The protein is S-adenosylmethionine synthase of Enterobacter sp. (strain 638).